Reading from the N-terminus, the 358-residue chain is Period circadian protein (358 aa).

PAS domains follow at residues 1-120 (GVVM…QTVP) and 138-240 (FIMR…YIIE).

As to quaternary structure, forms a heterodimer with timeless (TIM); the complex then translocates into the nucleus. Phosphorylated with a circadian rhythmicity.

It localises to the nucleus. Involved in the generation of biological rhythms. The biological cycle depends on the rhythmic formation and nuclear localization of the tim-per complex. Light induces the degradation of tim, which promotes elimination of per. Nuclear activity of the heterodimer coordinatively regulates per and tim transcription negative feedback loop. Behaves as a negative element in circadian transcriptional loop. Does not appear to bind DNA, suggesting indirect transcriptional inhibition. The protein is Period circadian protein (per) of Hyalophora cecropia (Cecropia moth).